The primary structure comprises 267 residues: Pyridoxine 5'-phosphate synthase (267 aa).

N8 is a 3-amino-2-oxopropyl phosphate binding site. 10-11 is a binding site for 1-deoxy-D-xylulose 5-phosphate; the sequence is DH. R19 provides a ligand contact to 3-amino-2-oxopropyl phosphate. Residue H44 is the Proton acceptor of the active site. The 1-deoxy-D-xylulose 5-phosphate site is built by R46 and H51. Residue E71 is the Proton acceptor of the active site. 1-deoxy-D-xylulose 5-phosphate is bound at residue T101. H219 serves as the catalytic Proton donor. Residues G220 and 241–242 contribute to the 3-amino-2-oxopropyl phosphate site; that span reads GH.

The protein belongs to the PNP synthase family. Homooctamer; tetramer of dimers.

The protein localises to the cytoplasm. The enzyme catalyses 3-amino-2-oxopropyl phosphate + 1-deoxy-D-xylulose 5-phosphate = pyridoxine 5'-phosphate + phosphate + 2 H2O + H(+). Its pathway is cofactor biosynthesis; pyridoxine 5'-phosphate biosynthesis; pyridoxine 5'-phosphate from D-erythrose 4-phosphate: step 5/5. In terms of biological role, catalyzes the complicated ring closure reaction between the two acyclic compounds 1-deoxy-D-xylulose-5-phosphate (DXP) and 3-amino-2-oxopropyl phosphate (1-amino-acetone-3-phosphate or AAP) to form pyridoxine 5'-phosphate (PNP) and inorganic phosphate. The polypeptide is Pyridoxine 5'-phosphate synthase (Helicobacter hepaticus (strain ATCC 51449 / 3B1)).